Reading from the N-terminus, the 96-residue chain is Dynein light chain roadblock-type 1 (96 aa).

Residue Ala2 is modified to N-acetylalanine.

This sequence belongs to the GAMAD family. In terms of assembly, homodimer. The cytoplasmic dynein 1 complex consists of two catalytic heavy chains (HCs) and a number of non-catalytic subunits presented by intermediate chains (ICs), light intermediate chains (LICs) and light chains (LCs); the composition seems to vary in respect to the IC, LIC and LC composition. The heavy chain homodimer serves as a scaffold for the probable homodimeric assembly of the respective non-catalytic subunits. The ICs and LICs bind directly to the HC dimer and the LCs assemble on the IC dimer. Interacts with DYNLRB2. Interacts with DYNC1I1 and DYNC1I2. Interacts with RAB6A isoform 1 (GTP-bound); the interaction is direct. Interacts with RAB6A isoform 2 (GDP-bound); the interaction is direct. Interacts with RAB6B (GDP-bound). High expression in heart, liver, brain and pancreas; moderate in placenta, skeletal muscle and kidney; low in lung, prostate, testis, small intestine and colon. Isoform 1 expression is up-regulated in 64% hepatocellular carcinoma (HCC) patients.

It localises to the cytoplasm. The protein localises to the cytoskeleton. Functionally, acts as one of several non-catalytic accessory components of the cytoplasmic dynein 1 complex that are thought to be involved in linking dynein to cargos and to adapter proteins that regulate dynein function. Cytoplasmic dynein 1 acts as a motor for the intracellular retrograde motility of vesicles and organelles along microtubules. The chain is Dynein light chain roadblock-type 1 from Homo sapiens (Human).